The sequence spans 458 residues: Serine--tRNA ligase (458 aa).

255-257 is an L-serine binding site; the sequence is TSE. ATP-binding positions include 286-288 and Val-302; that span reads RKE. Glu-309 is a binding site for L-serine. Residue 373-376 coordinates ATP; sequence ELVS. Thr-409 contributes to the L-serine binding site.

This sequence belongs to the class-II aminoacyl-tRNA synthetase family. Type-1 seryl-tRNA synthetase subfamily. Homodimer. The tRNA molecule binds across the dimer.

It is found in the cytoplasm. The catalysed reaction is tRNA(Ser) + L-serine + ATP = L-seryl-tRNA(Ser) + AMP + diphosphate + H(+). It carries out the reaction tRNA(Sec) + L-serine + ATP = L-seryl-tRNA(Sec) + AMP + diphosphate + H(+). Its pathway is aminoacyl-tRNA biosynthesis; selenocysteinyl-tRNA(Sec) biosynthesis; L-seryl-tRNA(Sec) from L-serine and tRNA(Sec): step 1/1. Its function is as follows. Catalyzes the attachment of serine to tRNA(Ser). Is also able to aminoacylate tRNA(Sec) with serine, to form the misacylated tRNA L-seryl-tRNA(Sec), which will be further converted into selenocysteinyl-tRNA(Sec). The polypeptide is Serine--tRNA ligase (Ignicoccus hospitalis (strain KIN4/I / DSM 18386 / JCM 14125)).